Reading from the N-terminus, the 136-residue chain is Histone H3 (136 aa).

The disordered stretch occupies residues 1–43 (MARTKQTARKSTGGKAPRKQLATKAARKSAPASGGVKKPHRFR). Position 5 is an N6-methylated lysine (K5). K10 is subject to N6-acetyllysine; alternate. Position 10 is an N6-methylated lysine; alternate (K10). S11 carries the phosphoserine modification. T12 is modified (phosphothreonine). An N6-acetyllysine modification is found at K15. N6-acetyllysine; alternate occurs at positions 19 and 24. Residues K19 and K24 each carry the N6-methylated lysine; alternate modification. At K28 the chain carries N6-methylated lysine. At S29 the chain carries Phosphoserine. K37 carries the post-translational modification N6-methylated lysine.

The protein belongs to the histone H3 family. In terms of assembly, the nucleosome is a histone octamer containing two molecules each of H2A, H2B, H3 and H4 assembled in one H3-H4 heterotetramer and two H2A-H2B heterodimers. The octamer wraps approximately 147 bp of DNA. In terms of processing, acetylation is generally linked to gene activation. Can be acetylated to form H3K9ac, H3K14ac, H3K18ac and H3K23ac. H3K9ac could compete with H3K9me and prevent gene silencing. H3K9ac is restricted to euchromatin. Methylated to form mainly H3K4me, H3K9me, H3K18me, H3K23me, H3K27me and H3K36me. H3K4me1/2/3, H3K9me3, H3K27me3 and H3K36me1/2/3 are typical marks for euchromatin, whereas heterochromatic chromocenters are enriched in H3K9me1/2 and H3K27me1/2. H2BK143ub1 is probably prerequisite for H3K4me. Post-translationally, can be phosphorylated to form H3S10ph, H3T11ph and H3S28ph.

The protein resides in the nucleus. It is found in the chromosome. Core component of nucleosome. Nucleosomes wrap and compact DNA into chromatin, limiting DNA accessibility to the cellular machineries which require DNA as a template. Histones thereby play a central role in transcription regulation, DNA repair, DNA replication and chromosomal stability. DNA accessibility is regulated via a complex set of post-translational modifications of histones, also called histone code, and nucleosome remodeling. The sequence is that of Histone H3 from Griffithsia japonica (Red alga).